The following is a 617-amino-acid chain: MSLKLNKYSILELIDTPTELRQLTENKLQTLCSELRLFLLNSVSKSSGHFASGLGTIELTVALHYVYNTPFDHLIWDVGHQAYPHKILTGRKNRIYSIRQRHGLHSFPCRNESKYDVLSVGHSSTSISAGLGLAIASEREKLNRRTVCIIGDGALTAGMAFEAINHAGTIKSNLLIILNDNNMSISENVGALHTQCPQQKKYTNITSDIKKIINSNIYNKNKNTSTAIALFSNLGFNCTGPIDGHNILTLIHNLKNIRNTKTGPQFLHVITKKGYGYKPAEKDPIKWHAVPKFNLKSGILSTNKNIKYTTYSKIFGDWLCQTAMHDNKIIGITPAMREGSGMNKFAQKYPKQYFDVAIAEQHAVTFSAGLAIAGYKPVVAIYSTFLQRAYDQIIHDIAIQKLPVLFAVDRGGIVGSDGETHQGAFDLSYLRCIPNLIIMTPSNAYECKLMLHTGYHYQYGPSVVRYPKGCATNNILYPYNNTTSLYSIPLSKGIIHHQGQHIAILNFGTLLKPAYNVALQLNATLVDMRFVKPLDEMLIKKLTENHQAFITLEENSIIGGAGSGVNEFLVQNKLLIPTLNIGLPDFFIPQGAQREMLSELGLDSQGIYKKIVRWIKI.

Residues H80 and 121 to 123 (GHS) each bind thiamine diphosphate. D152 provides a ligand contact to Mg(2+). Thiamine diphosphate is bound by residues 153–154 (GA), N181, Y277, and E360. N181 serves as a coordination point for Mg(2+).

Belongs to the transketolase family. DXPS subfamily. In terms of assembly, homodimer. The cofactor is Mg(2+). Thiamine diphosphate serves as cofactor.

The enzyme catalyses D-glyceraldehyde 3-phosphate + pyruvate + H(+) = 1-deoxy-D-xylulose 5-phosphate + CO2. The protein operates within metabolic intermediate biosynthesis; 1-deoxy-D-xylulose 5-phosphate biosynthesis; 1-deoxy-D-xylulose 5-phosphate from D-glyceraldehyde 3-phosphate and pyruvate: step 1/1. In terms of biological role, catalyzes the acyloin condensation reaction between C atoms 2 and 3 of pyruvate and glyceraldehyde 3-phosphate to yield 1-deoxy-D-xylulose-5-phosphate (DXP). The chain is 1-deoxy-D-xylulose-5-phosphate synthase from Blochmanniella floridana.